The chain runs to 394 residues: Histidinol dehydrogenase (394 aa).

Residues tyrosine 113, glutamine 172, and asparagine 195 each coordinate NAD(+). Substrate is bound by residues threonine 218, glutamine 240, and histidine 243. Glutamine 240 and histidine 243 together coordinate Zn(2+). Catalysis depends on proton acceptor residues glutamate 294 and histidine 295. Substrate is bound by residues histidine 295, aspartate 327, glutamate 380, and histidine 385. A Zn(2+)-binding site is contributed by aspartate 327. Histidine 385 lines the Zn(2+) pocket.

The protein belongs to the histidinol dehydrogenase family. It depends on Zn(2+) as a cofactor.

It carries out the reaction L-histidinol + 2 NAD(+) + H2O = L-histidine + 2 NADH + 3 H(+). The protein operates within amino-acid biosynthesis; L-histidine biosynthesis; L-histidine from 5-phospho-alpha-D-ribose 1-diphosphate: step 9/9. Catalyzes the sequential NAD-dependent oxidations of L-histidinol to L-histidinaldehyde and then to L-histidine. The protein is Histidinol dehydrogenase of Sulfurisphaera tokodaii (strain DSM 16993 / JCM 10545 / NBRC 100140 / 7) (Sulfolobus tokodaii).